We begin with the raw amino-acid sequence, 201 residues long: GTP cyclohydrolase 1 (201 aa).

Residues 1-20 (MDATVKKMSPETSRPSREEA) form a disordered region. Zn(2+) is bound by residues Cys91, His94, and Cys162.

This sequence belongs to the GTP cyclohydrolase I family. Homomer.

The enzyme catalyses GTP + H2O = 7,8-dihydroneopterin 3'-triphosphate + formate + H(+). It participates in cofactor biosynthesis; 7,8-dihydroneopterin triphosphate biosynthesis; 7,8-dihydroneopterin triphosphate from GTP: step 1/1. This chain is GTP cyclohydrolase 1, found in Allorhizobium ampelinum (strain ATCC BAA-846 / DSM 112012 / S4) (Agrobacterium vitis (strain S4)).